The sequence spans 98 residues: Gas vesicle protein J2 (98 aa).

Residues 75–98 (AGVDADDSKSVLERPDPPTTEGSE) form a disordered region. Positions 80 to 90 (DDSKSVLERPD) are enriched in basic and acidic residues.

Belongs to the gas vesicle GvpA family. GvpF to GvpM interact with each other in vitro, and may form multi-subunit complex(es). Interacts with GvpA.

It is found in the gas vesicle. A minor component of the gas vesicle. Proteins GvpF to GvpM might be involved in nucleating gas vesicle formation. Gas vesicles are hollow, gas filled proteinaceous nanostructures found in several microbial planktonic microorganisms. They allow positioning of halobacteria at the optimal depth for growth in the poorly aerated, shallow brine pools of their habitat. In terms of biological role, expression of 2 c-vac DNA fragments containing 2 divergently transcribed regions (gvpE-gvpF-gvpG-gvpH-gvpI-gvpJ-gvpK-gvpL-gvpM and gvpA-gvpC-gvpN-gvpO) allows H.volcanii to produce gas vesicles. The sequence is that of Gas vesicle protein J2 from Halobacterium salinarum (strain ATCC 700922 / JCM 11081 / NRC-1) (Halobacterium halobium).